The primary structure comprises 274 residues: Diaminopimelate epimerase (274 aa).

Residues N11, Q44, and N64 each coordinate substrate. Catalysis depends on C73, which acts as the Proton donor. Substrate-binding positions include 74 to 75 (GN), N157, N190, and 208 to 209 (ER). The active-site Proton acceptor is C217. 218–219 (GS) serves as a coordination point for substrate.

This sequence belongs to the diaminopimelate epimerase family. Homodimer.

It localises to the cytoplasm. It catalyses the reaction (2S,6S)-2,6-diaminopimelate = meso-2,6-diaminopimelate. It functions in the pathway amino-acid biosynthesis; L-lysine biosynthesis via DAP pathway; DL-2,6-diaminopimelate from LL-2,6-diaminopimelate: step 1/1. Its function is as follows. Catalyzes the stereoinversion of LL-2,6-diaminopimelate (L,L-DAP) to meso-diaminopimelate (meso-DAP), a precursor of L-lysine and an essential component of the bacterial peptidoglycan. The chain is Diaminopimelate epimerase from Glaesserella parasuis serovar 5 (strain SH0165) (Haemophilus parasuis).